Reading from the N-terminus, the 209-residue chain is Imidazole glycerol phosphate synthase subunit HisH (209 aa).

Residues 3–209 (SVAVIDYGMG…ANFLTWNGVS (207 aa)) enclose the Glutamine amidotransferase type-1 domain. C82 functions as the Nucleophile in the catalytic mechanism. Residues H187 and E189 contribute to the active site.

Heterodimer of HisH and HisF.

Its subcellular location is the cytoplasm. It carries out the reaction 5-[(5-phospho-1-deoxy-D-ribulos-1-ylimino)methylamino]-1-(5-phospho-beta-D-ribosyl)imidazole-4-carboxamide + L-glutamine = D-erythro-1-(imidazol-4-yl)glycerol 3-phosphate + 5-amino-1-(5-phospho-beta-D-ribosyl)imidazole-4-carboxamide + L-glutamate + H(+). The catalysed reaction is L-glutamine + H2O = L-glutamate + NH4(+). It functions in the pathway amino-acid biosynthesis; L-histidine biosynthesis; L-histidine from 5-phospho-alpha-D-ribose 1-diphosphate: step 5/9. Its function is as follows. IGPS catalyzes the conversion of PRFAR and glutamine to IGP, AICAR and glutamate. The HisH subunit catalyzes the hydrolysis of glutamine to glutamate and ammonia as part of the synthesis of IGP and AICAR. The resulting ammonia molecule is channeled to the active site of HisF. The polypeptide is Imidazole glycerol phosphate synthase subunit HisH (Nitrosococcus oceani (strain ATCC 19707 / BCRC 17464 / JCM 30415 / NCIMB 11848 / C-107)).